Reading from the N-terminus, the 156-residue chain is Small ribosomal subunit protein uS7 (156 aa).

It belongs to the universal ribosomal protein uS7 family. Part of the 30S ribosomal subunit. Contacts proteins S9 and S11.

In terms of biological role, one of the primary rRNA binding proteins, it binds directly to 16S rRNA where it nucleates assembly of the head domain of the 30S subunit. Is located at the subunit interface close to the decoding center, probably blocks exit of the E-site tRNA. The sequence is that of Small ribosomal subunit protein uS7 from Mycobacterium leprae (strain TN).